We begin with the raw amino-acid sequence, 255 residues long: Acid phosphatase 1 (255 aa).

A signal peptide spans 1–15; sequence MRIFVFLVLLTVAIG. Residue N142 is glycosylated (N-linked (GlcNAc...) asparagine).

The protein belongs to the APS1/VSP family.

The catalysed reaction is a phosphate monoester + H2O = an alcohol + phosphate. This is Acid phosphatase 1 (APS1) from Solanum lycopersicum (Tomato).